Consider the following 81-residue polypeptide: Apolipoprotein C-I, acidic form (81 aa).

The N-terminal stretch at Met-1–Gly-24 is a signal peptide.

The protein belongs to the apolipoprotein C1 family.

Its subcellular location is the secreted. In Theropithecus gelada (Gelada baboon), this protein is Apolipoprotein C-I, acidic form (APOC1A).